A 1174-amino-acid chain; its full sequence is Fanconi anemia group J protein homolog (1174 aa).

The Helicase ATP-binding domain occupies 11–445 (GGVKIHFPCR…KSHEPLRDVC (435 aa)). Residues 101–126 (NLDTSPHFNSPSKPSSGRNGVSTPCQ) show a composition bias toward polar residues. 2 disordered regions span residues 101 to 160 (NLDT…EKKR) and 187 to 208 (LASEKRVKPESPIGKSFSDRKD). Residues 134–143 (LAAKLSAKKQ) show a composition bias toward low complexity. A Nuclear localization signal motif is present at residues 158 to 175 (KKRIRPLETTQQIRKRHC). ATP is bound at residue 185–192 (ARLASEKR). Residues Cys286, Cys301, Cys313, and Cys353 each coordinate [4Fe-4S] cluster. The DEAH box motif lies at 393 to 396 (VILD). The segment at 888–1063 (SRRHQKVTNR…SNETADTSLG (176 aa)) is interaction with BRCA1. Polar residues-rich tracts occupy residues 923 to 935 (TSVSESSHQSPEN) and 990 to 1001 (SRSSSPTFGKQT). 2 disordered regions span residues 923 to 1001 (TSVS…GKQT) and 1102 to 1155 (LSPG…SSHS). Phosphoserine occurs at positions 929, 932, and 994. Positions 1138–1147 (DTNEENGELV) are enriched in acidic residues. Lys1174 is subject to N6-acetyllysine.

The protein belongs to the DEAD box helicase family. DEAH subfamily. In terms of assembly, binds directly to the BRCT domains of BRCA1. Interacts with the CIA complex components CIAO1, CIAO2B and MMS19. It depends on [4Fe-4S] cluster as a cofactor. In terms of processing, phosphorylated. Phosphorylation is necessary for interaction with BRCA1, and is cell-cycle regulated.

It is found in the nucleus. Its subcellular location is the cytoplasm. The catalysed reaction is Couples ATP hydrolysis with the unwinding of duplex DNA at the replication fork by translocating in the 5'-3' direction. This creates two antiparallel DNA single strands (ssDNA). The leading ssDNA polymer is the template for DNA polymerase III holoenzyme which synthesizes a continuous strand.. It catalyses the reaction ATP + H2O = ADP + phosphate + H(+). Functionally, DNA-dependent helicase and 5' to 3' DNA helicase required for the maintenance of chromosomal stability. Acts late in the Fanconi anemia pathway, after FANCD2 ubiquitination. Involved in the repair of DNA double-strand breaks by homologous recombination in a manner that depends on its association with BRCA1. Involved in the repair of abasic sites at replication forks by promoting the degradation of DNA-protein cross-links: acts by catalyzing unfolding of HMCES DNA-protein cross-link via its helicase activity, exposing the underlying DNA and enabling cleavage of the DNA-protein adduct by the SPRTN metalloprotease. Can unwind RNA:DNA hybrids and G-quadruplex DNA. This chain is Fanconi anemia group J protein homolog, found in Mus musculus (Mouse).